The sequence spans 1337 residues: Multidrug resistance protein fer6 (1337 aa).

Positions 1 to 23 are cleaved as a signal peptide; that stretch reads MTPEASANWFSLCWFAWIDPILT. A glycan (N-linked (GlcNAc...) asparagine) is linked at Asn-71. 2 consecutive transmembrane segments (helical) span residues 94–114 and 138–158; these read FWIG…SPLL and LGSG…CVFL. An ABC transmembrane type-1 1 domain is found at 95–386; that stretch reads WIGGLLKLLA…LPIAWNAIVD (292 aa). The N-linked (GlcNAc...) asparagine glycan is linked to Asn-187. Transmembrane regions (helical) follow at residues 220–242, 247–269, 331–351, and 359–379; these read FFHM…IWSL, LPGI…RLFA, ALAF…YALV, and ILFS…FLPI. The ABC transporter 1 domain maps to 417 to 667; sequence IQLEDASFTW…KGRVAELLLT (251 aa). The interval 432–460 is disordered; the sequence is ADTAKPVNEKKGQDSPSNEKETPVDRAST. Positions 438-455 are enriched in basic and acidic residues; that stretch reads VNEKKGQDSPSNEKETPV. Asn-465 carries an N-linked (GlcNAc...) asparagine glycan. 478–485 is a binding site for ATP; the sequence is GGVGSGKS. Residues 699–751 form a disordered region; that stretch reads GSASNRNSEASESTTTTVNAESKDTSNAEGVTNKTEKKDLVAPPAQAKSKALM. A compositionally biased stretch (low complexity) spans 700–718; sequence SASNRNSEASESTTTTVNA. An N-linked (GlcNAc...) asparagine glycan is attached at Asn-731. The next 6 helical transmembrane spans lie at 769 to 789, 817 to 837, 890 to 909, 915 to 933, 999 to 1019, and 1028 to 1048; these read YLNA…VLVF, GIYA…GVIF, AMRT…VLIA, FLIP…AAYY, LSVR…ILVV, and GETG…GWMI. An ABC transmembrane type-1 2 domain is found at 781-1056; that stretch reads LFLVAVLVFQ…MIRHAAELEN (276 aa). Asn-1057 is a glycosylation site (N-linked (GlcNAc...) asparagine). One can recognise an ABC transporter 2 domain in the interval 1097 to 1325; that stretch reads IRFEGVEAKY…EKGAFRALCD (229 aa). An ATP-binding site is contributed by 1131–1138; the sequence is GRTGAGKS. A glycan (N-linked (GlcNAc...) asparagine) is linked at Asn-1227.

Belongs to the ABC transporter superfamily. ABCC family. Conjugate transporter (TC 3.A.1.208) subfamily.

Its subcellular location is the membrane. Multidrug resistance protein; part of the gene cluster that mediates the biosynthesis of siderophore ferrichrome A which is contributing to organismal virulence. In Mycosarcoma maydis (Corn smut fungus), this protein is Multidrug resistance protein fer6.